Here is a 138-residue protein sequence, read N- to C-terminus: UPF0201 protein PYRAB09730 (138 aa).

This sequence belongs to the UPF0201 family.

The sequence is that of UPF0201 protein PYRAB09730 from Pyrococcus abyssi (strain GE5 / Orsay).